Reading from the N-terminus, the 411-residue chain is tRNA (guanine(37)-N(1))-methyltransferase (411 aa).

S-adenosyl-L-methionine-binding positions include His216, 254–255 (DL), 282–283 (DG), and Asn303. Residues 391–411 (ERQASKQDDPKRRKVAAENAA) form a disordered region.

This sequence belongs to the class I-like SAM-binding methyltransferase superfamily. TRM5/TYW2 family. Monomer.

Its subcellular location is the mitochondrion matrix. The protein localises to the nucleus. It localises to the cytoplasm. The enzyme catalyses guanosine(37) in tRNA + S-adenosyl-L-methionine = N(1)-methylguanosine(37) in tRNA + S-adenosyl-L-homocysteine + H(+). In terms of biological role, specifically methylates the N1 position of guanosine-37 in various cytoplasmic and mitochondrial tRNAs. Methylation is not dependent on the nature of the nucleoside 5' of the target nucleoside. This is the first step in the biosynthesis of wybutosine (yW), a modified base adjacent to the anticodon of tRNAs and required for accurate decoding. The sequence is that of tRNA (guanine(37)-N(1))-methyltransferase from Phytophthora infestans (strain T30-4) (Potato late blight agent).